The chain runs to 201 residues: Small ribosomal subunit protein uS4 (201 aa).

The tract at residues 19–41 (LVGGSSAYEKRPYPPGQHGRARI) is disordered. The 67-residue stretch at 91–157 (SRLDNVVYRA…LPFEVARETA (67 aa)) folds into the S4 RNA-binding domain.

This sequence belongs to the universal ribosomal protein uS4 family. As to quaternary structure, part of the 30S ribosomal subunit. Contacts protein S5. The interaction surface between S4 and S5 is involved in control of translational fidelity.

Functionally, one of the primary rRNA binding proteins, it binds directly to 16S rRNA where it nucleates assembly of the body of the 30S subunit. With S5 and S12 plays an important role in translational accuracy. The protein is Small ribosomal subunit protein uS4 of Mycobacteroides abscessus (strain ATCC 19977 / DSM 44196 / CCUG 20993 / CIP 104536 / JCM 13569 / NCTC 13031 / TMC 1543 / L948) (Mycobacterium abscessus).